We begin with the raw amino-acid sequence, 370 residues long: GMP synthase [glutamine-hydrolyzing] subunit B (370 aa).

One can recognise a GMPS ATP-PPase domain in the interval 3 to 189 (FDPQKFVDEI…LGLPRDIYNR (187 aa)). ATP is bound at residue 29–35 (SGGVDST).

In terms of assembly, heterodimer composed of a glutamine amidotransferase subunit (A) and a GMP-binding subunit (B).

It carries out the reaction XMP + L-glutamine + ATP + H2O = GMP + L-glutamate + AMP + diphosphate + 2 H(+). Its pathway is purine metabolism; GMP biosynthesis; GMP from XMP (L-Gln route): step 1/1. In terms of biological role, catalyzes the synthesis of GMP from XMP. In Sulfurisphaera tokodaii (strain DSM 16993 / JCM 10545 / NBRC 100140 / 7) (Sulfolobus tokodaii), this protein is GMP synthase [glutamine-hydrolyzing] subunit B (guaAB).